A 362-amino-acid chain; its full sequence is Peptide chain release factor 1 (362 aa).

Residue glutamine 240 is modified to N5-methylglutamine.

Belongs to the prokaryotic/mitochondrial release factor family. Post-translationally, methylated by PrmC. Methylation increases the termination efficiency of RF1.

The protein resides in the cytoplasm. Its function is as follows. Peptide chain release factor 1 directs the termination of translation in response to the peptide chain termination codons UAG and UAA. This is Peptide chain release factor 1 from Bifidobacterium adolescentis (strain ATCC 15703 / DSM 20083 / NCTC 11814 / E194a).